The sequence spans 173 residues: Flavodoxin 2 (173 aa).

One can recognise a Flavodoxin-like domain in the interval 3-165; the sequence is MGLFYGSSTC…RIQSWCEQIL (163 aa).

Belongs to the flavodoxin family. The cofactor is FMN.

Functionally, low-potential electron donor to a number of redox enzymes. This Escherichia coli O157:H7 protein is Flavodoxin 2 (fldB).